The chain runs to 332 residues: Cysteine and histidine-rich domain-containing protein 1 (332 aa).

Alanine 2 bears the N-acetylalanine mark. The interval 2–77 (ALLCYNRGCG…KPPESVKPEV (76 aa)) is interaction with PPP5C. Zn(2+)-binding residues include cysteine 5, cysteine 10, cysteine 24, histidine 27, cysteine 42, and cysteine 43. 2 consecutive CHORD domains span residues 5–64 (CYNR…KGRH) and 157–216 (CKNG…KGKH). Residue threonine 47 is modified to Phosphothreonine. Serine 51 is subject to Phosphoserine. Residues cysteine 59, histidine 64, cysteine 157, cysteine 162, cysteine 176, histidine 179, cysteine 194, cysteine 195, cysteine 211, and histidine 216 each coordinate Zn(2+). Residues 62–81 (GRHNSEKPPESVKPEVKTTE) form a disordered region. The segment covering 64 to 81 (HNSEKPPESVKPEVKTTE) has biased composition (basic and acidic residues). Positions 65–316 (NSEKPPESVK…AEPMQWASLE (252 aa)) are interaction with HSP90AA1 and HSP90AB1. The region spanning 227-316 (VVPCRHDWHQ…AEPMQWASLE (90 aa)) is the CS domain.

Interacts with HSP90AA1, HSP90AB1, PPP5C, ROCK1 and ROCK2.

Regulates centrosome duplication, probably by inhibiting the kinase activity of ROCK2. Proposed to act as co-chaperone for HSP90. May play a role in the regulation of NOD1 via a HSP90 chaperone complex. In vitro, has intrinsic chaperone activity. This function may be achieved by inhibiting association of ROCK2 with NPM1. Plays a role in ensuring the localization of the tyrosine kinase receptor EGFR to the plasma membrane, and thus ensures the subsequent regulation of EGFR activity and EGF-induced actin cytoskeleton remodeling. Involved in stress response. Prevents tumorigenesis. This Pongo abelii (Sumatran orangutan) protein is Cysteine and histidine-rich domain-containing protein 1 (CHORDC1).